A 574-amino-acid polypeptide reads, in one-letter code: Glycine--tRNA ligase (574 aa).

Residues R96 and E162 each coordinate substrate. Residues R194–E196, I204–F209, E327–C328, and G450–R453 each bind ATP. F209–E213 lines the substrate pocket. Substrate is bound at residue E446–G450.

It belongs to the class-II aminoacyl-tRNA synthetase family.

Its subcellular location is the cytoplasm. The catalysed reaction is tRNA(Gly) + glycine + ATP = glycyl-tRNA(Gly) + AMP + diphosphate. Catalyzes the attachment of glycine to tRNA(Gly). The protein is Glycine--tRNA ligase of Methanococcus maripaludis (strain DSM 14266 / JCM 13030 / NBRC 101832 / S2 / LL).